Consider the following 170-residue polypeptide: Ribosome maturation factor RimM (170 aa).

Residues 98–170 (PDEYYWVDLE…LIVVDWDPDF (73 aa)) form the PRC barrel domain.

It belongs to the RimM family. Binds ribosomal protein uS19.

The protein localises to the cytoplasm. In terms of biological role, an accessory protein needed during the final step in the assembly of 30S ribosomal subunit, possibly for assembly of the head region. Essential for efficient processing of 16S rRNA. May be needed both before and after RbfA during the maturation of 16S rRNA. It has affinity for free ribosomal 30S subunits but not for 70S ribosomes. The sequence is that of Ribosome maturation factor RimM from Xanthomonas campestris pv. campestris (strain 8004).